We begin with the raw amino-acid sequence, 335 residues long: MYSLIRKALFSMEAETAHYFSIQALKLMGKLPFSLCSTTLNPVEVMGLKFKNPIGLAAGADKNGEAIDGFAKLGFGFIEVGTVTPLAQDGNNKPRQFRILEAEGIINRNGFNNQGVDVLVENVKKASYDGILGINIGKNATTPIENALDDYQICLHKVYSYADYITVNISSPNTHNLRALQYGEALDHLLAELKTEQAKLAKKFNQYKPLVLKIAPDLTNEEIVSIADSLIRHQMDGVIAGNTTLSRENIAGFNHAHQQGGLSGKPLHTLSTKLISTLAKELKGKIPIIGSGGVHSIDSGQQKIDAGAHLLQLYSAMIYQGPTLIQELAKKIILR.

FMN-binding positions include 58 to 62 and threonine 82; that span reads AGADK. Lysine 62 is a substrate binding site. 107 to 111 serves as a coordination point for substrate; the sequence is NRNGF. Residues asparagine 135 and asparagine 168 each contribute to the FMN site. Asparagine 168 contributes to the substrate binding site. The active-site Nucleophile is serine 171. Asparagine 173 contributes to the substrate binding site. Residues lysine 213 and glycine 241 each coordinate FMN. 242-243 is a binding site for substrate; it reads NT. FMN contacts are provided by residues glycine 264, glycine 293, and 314 to 315; that span reads YS.

The protein belongs to the dihydroorotate dehydrogenase family. Type 2 subfamily. Monomer. FMN serves as cofactor.

The protein resides in the cell membrane. It carries out the reaction (S)-dihydroorotate + a quinone = orotate + a quinol. Its pathway is pyrimidine metabolism; UMP biosynthesis via de novo pathway; orotate from (S)-dihydroorotate (quinone route): step 1/1. Catalyzes the conversion of dihydroorotate to orotate with quinone as electron acceptor. The polypeptide is Dihydroorotate dehydrogenase (quinone) (Haemophilus ducreyi (strain 35000HP / ATCC 700724)).